Reading from the N-terminus, the 62-residue chain is DNA-directed RNA polymerase subunit Rpo10 (62 aa).

Zn(2+) contacts are provided by C6, C9, C43, and C44.

This sequence belongs to the archaeal Rpo10/eukaryotic RPB10 RNA polymerase subunit family. In terms of assembly, part of the RNA polymerase complex. Requires Zn(2+) as cofactor.

It localises to the cytoplasm. The enzyme catalyses RNA(n) + a ribonucleoside 5'-triphosphate = RNA(n+1) + diphosphate. Functionally, DNA-dependent RNA polymerase (RNAP) catalyzes the transcription of DNA into RNA using the four ribonucleoside triphosphates as substrates. In Methanospirillum hungatei JF-1 (strain ATCC 27890 / DSM 864 / NBRC 100397 / JF-1), this protein is DNA-directed RNA polymerase subunit Rpo10.